Consider the following 302-residue polypeptide: 4-hydroxy-tetrahydrodipicolinate synthase (302 aa).

Threonine 55 contributes to the pyruvate binding site. Tyrosine 144 serves as the catalytic Proton donor/acceptor. Lysine 172 functions as the Schiff-base intermediate with substrate in the catalytic mechanism. Valine 214 serves as a coordination point for pyruvate.

It belongs to the DapA family. In terms of assembly, homotetramer; dimer of dimers.

The protein resides in the cytoplasm. It carries out the reaction L-aspartate 4-semialdehyde + pyruvate = (2S,4S)-4-hydroxy-2,3,4,5-tetrahydrodipicolinate + H2O + H(+). Its pathway is amino-acid biosynthesis; L-lysine biosynthesis via DAP pathway; (S)-tetrahydrodipicolinate from L-aspartate: step 3/4. In terms of biological role, catalyzes the condensation of (S)-aspartate-beta-semialdehyde [(S)-ASA] and pyruvate to 4-hydroxy-tetrahydrodipicolinate (HTPA). The chain is 4-hydroxy-tetrahydrodipicolinate synthase from Prochlorococcus marinus (strain NATL2A).